Here is a 493-residue protein sequence, read N- to C-terminus: 3-octaprenyl-4-hydroxybenzoate carboxy-lyase (493 aa).

Asn172 contributes to the Mn(2+) binding site. Prenylated FMN is bound by residues 175-177, 189-191, and 194-195; these read IYR, RWL, and RG. Residue Glu238 participates in Mn(2+) binding. Catalysis depends on Asp287, which acts as the Proton donor.

The protein belongs to the UbiD family. In terms of assembly, homohexamer. Prenylated FMN is required as a cofactor. Requires Mn(2+) as cofactor.

The protein resides in the cell membrane. The enzyme catalyses a 4-hydroxy-3-(all-trans-polyprenyl)benzoate + H(+) = a 2-(all-trans-polyprenyl)phenol + CO2. The protein operates within cofactor biosynthesis; ubiquinone biosynthesis. In terms of biological role, catalyzes the decarboxylation of 3-octaprenyl-4-hydroxy benzoate to 2-octaprenylphenol, an intermediate step in ubiquinone biosynthesis. The sequence is that of 3-octaprenyl-4-hydroxybenzoate carboxy-lyase from Shewanella pealeana (strain ATCC 700345 / ANG-SQ1).